We begin with the raw amino-acid sequence, 328 residues long: 4-hydroxythreonine-4-phosphate dehydrogenase (328 aa).

Residue threonine 125 coordinates substrate. A divalent metal cation is bound by residues histidine 160, histidine 203, and histidine 269. 3 residues coordinate substrate: lysine 277, asparagine 286, and arginine 295.

The protein belongs to the PdxA family. As to quaternary structure, homodimer. Requires a divalent metal cation as cofactor.

It is found in the cytoplasm. The catalysed reaction is 4-(phosphooxy)-L-threonine + NAD(+) = 3-amino-2-oxopropyl phosphate + CO2 + NADH. The protein operates within cofactor biosynthesis; pyridoxine 5'-phosphate biosynthesis; pyridoxine 5'-phosphate from D-erythrose 4-phosphate: step 4/5. Functionally, catalyzes the NAD(P)-dependent oxidation of 4-(phosphooxy)-L-threonine (HTP) into 2-amino-3-oxo-4-(phosphooxy)butyric acid which spontaneously decarboxylates to form 3-amino-2-oxopropyl phosphate (AHAP). In Synechococcus sp. (strain RCC307), this protein is 4-hydroxythreonine-4-phosphate dehydrogenase.